A 210-amino-acid chain; its full sequence is LexA repressor (210 aa).

Positions 25–44 (AGQVAQEVGITKQAISQQVN) form a DNA-binding region, H-T-H motif. Catalysis depends on for autocatalytic cleavage activity residues serine 120 and lysine 159.

Belongs to the peptidase S24 family. In terms of assembly, homodimer.

The enzyme catalyses Hydrolysis of Ala-|-Gly bond in repressor LexA.. Functionally, represses a number of genes involved in the response to DNA damage (SOS response), including recA and lexA. In the presence of single-stranded DNA, RecA interacts with LexA causing an autocatalytic cleavage which disrupts the DNA-binding part of LexA, leading to derepression of the SOS regulon and eventually DNA repair. This Deinococcus radiodurans (strain ATCC 13939 / DSM 20539 / JCM 16871 / CCUG 27074 / LMG 4051 / NBRC 15346 / NCIMB 9279 / VKM B-1422 / R1) protein is LexA repressor.